The following is a 938-amino-acid chain: Protein NLP3 (938 aa).

Disordered stretches follow at residues 1–26 and 557–597; these read MEVDPSSSLPGAGEGGGGGIGGGGGD and LADD…KAEK. Positions 12-26 are enriched in gly residues; that stretch reads AGEGGGGGIGGGGGD. Basic and acidic residues predominate over residues 580–597; that stretch reads SLHKSNKPPERRRGKAEK. Residues 585–666 enclose the RWP-RK domain; sequence NKPPERRRGK…IESVQGSDAA (82 aa). Residues 640 to 662 adopt a coiled-coil conformation; the sequence is SRKINKVNRSLSKLKQVIESVQG. The disordered stretch occupies residues 743 to 769; sequence DKASHSRSSSGEGSINSRTSEASCHGS. A compositionally biased stretch (low complexity) spans 748–762; it reads SRSSSGEGSINSRTS. The region spanning 847-926 is the PB1 domain; sequence TVTIKASFKE…HVIRLLVSDV (80 aa).

The protein resides in the nucleus. Probable transcription factor. The protein is Protein NLP3 (NLP3) of Oryza sativa subsp. japonica (Rice).